A 961-amino-acid chain; its full sequence is Ubiquitin carboxyl-terminal hydrolase 4 (961 aa).

One can recognise a DUSP domain in the interval 11-122 (PDVETQKTEL…GQQPIVRKVV (112 aa)). The necessary for interaction with SART3 stretch occupies residues 27 to 216 (TLQRGAQWYL…LYQGQVLVIE (190 aa)). The Nuclear export signal motif lies at 133 to 141 (VEVYLLELK). Residues 142-226 (LCENSDPTNV…PQNEDGTWPR (85 aa)) enclose the Ubiquitin-like 1 domain. Residues 219 to 257 (NEDGTWPRQTLQSKSSTAPSRNFTTSSKPSASPYSSMSA) form a disordered region. The segment covering 225 to 243 (PRQTLQSKSSTAPSRNFTT) has biased composition (polar residues). Residues 229 to 295 (LQSKSSTAPS…SYNCQEPPSP (67 aa)) are required for USP4 activation by providing conformational flexibility between the DUSP and catalytic domains. Positions 244-257 (SSKPSASPYSSMSA) are enriched in low complexity. The 620-residue stretch at 302-921 (CGLGNLGNTC…AAYVLFYQRR (620 aa)) folds into the USP domain. The active site involves cysteine 311. The segment at 384 to 386 (PQF) is regulates ubiquitin dissociation. The interval 405–407 (LHE) is necessary for interaction with RBL2. Serine 445 bears the Phosphoserine mark. Positions 459–463 (LVCPE) are necessary for interaction with RB1 and RBL2. Cysteine 461 and cysteine 464 together coordinate Zn(2+). One can recognise a Ubiquitin-like 2 domain in the interval 483-571 (LKKDRIMEVF…IFVYEICTTP (89 aa)). The interacts with DUSP and ubiquitin-like 1 domains and is required for USP4 activation stretch occupies residues 485-773 (KDRIMEVFLV…SQPQKKKKAA (289 aa)). The interval 641–700 (SSPLEPGACNGSRGSYEGDEEEMDHQEEGKEQLSEVEESGEDSQGGDPTETTQKAKGPPR) is disordered. Phosphoserine is present on residues serine 655, serine 674, and serine 679. A Nuclear localization signal motif is present at residues 765–770 (QPQKKK). Residues cysteine 797 and cysteine 800 each coordinate Zn(2+). Histidine 879 is an active-site residue. Residues 924–961 (ECPSTSSPVSFPGSDGGAKLSSSQQDLGEEEAYTMDTN) are disordered. A compositionally biased stretch (acidic residues) spans 950–961 (LGEEEAYTMDTN).

It belongs to the peptidase C19 family. USP4 subfamily. As to quaternary structure, interacts with RB1 (both dephosphorylated and hypophosphorylated forms). Interacts with RBL1 and RBL2. Interacts with ADORA2A (via cytoplasmic C-terminus); the interaction is direct. Interacts with SART3; recruits USP4 to its substrate PRPF3. Phosphorylated at Ser-445 by PKB/AKT1 in response to EGF stimulus, promoting its ability deubiquitinate RHEB. Post-translationally, monoubiquitinated by TRIM21. Ubiquitination does not lead to its proteasomal degradation. Autodeubiquitinated. Expressed in hippocampus and striatum (at protein level).

The protein resides in the cytoplasm. It localises to the nucleus. It catalyses the reaction Thiol-dependent hydrolysis of ester, thioester, amide, peptide and isopeptide bonds formed by the C-terminal Gly of ubiquitin (a 76-residue protein attached to proteins as an intracellular targeting signal).. With respect to regulation, the completion of the deubiquitinase reaction is mediated by the DUSP and ubiquitin-like 1 domains which promotes the release of ubiquitin from the catalytic site enabling subsequent reactions to occur. Its function is as follows. Deubiquitinating enzyme that removes conjugated ubiquitin from target proteins. Deubiquitinates PDPK1. Deubiquitinates TRIM21. Deubiquitinates receptor ADORA2A which increases the amount of functional receptor at the cell surface. Deubiquitinates HAS2. Deubiquitinates RHEB in response to EGF signaling, promoting mTORC1 signaling. May regulate mRNA splicing through deubiquitination of the U4 spliceosomal protein PRPF3. This may prevent its recognition by the U5 component PRPF8 thereby destabilizing interactions within the U4/U6.U5 snRNP. May also play a role in the regulation of quality control in the ER. The chain is Ubiquitin carboxyl-terminal hydrolase 4 (Usp4) from Rattus norvegicus (Rat).